Here is a 484-residue protein sequence, read N- to C-terminus: Probable D-lactate dehydrogenase, mitochondrial (484 aa).

Residues 1–52 (MAMLLRVATQRLSPWRSFCSRGSQGGLSQDFVEALKAVVGSPHVSTASAVRE) constitute a mitochondrion transit peptide. Lysine 36 carries the N6-acetyllysine modification. The FAD-binding PCMH-type domain occupies 62–242 (RCQPPDAVVW…TSTTLRLHPA (181 aa)). At lysine 292 the chain carries N6-acetyllysine. Lysine 335 is subject to N6-acetyllysine; alternate. Position 335 is an N6-succinyllysine; alternate (lysine 335). 2 positions are modified to N6-acetyllysine: lysine 422 and lysine 449.

This sequence belongs to the FAD-binding oxidoreductase/transferase type 4 family. As to quaternary structure, interacts with CSRP3. It depends on FAD as a cofactor. Readily detected in liver and kidney, with a weaker signal observed in heart, skeletal muscle, stomach, brain, and lung.

Its subcellular location is the mitochondrion. The enzyme catalyses (R)-lactate + 2 Fe(III)-[cytochrome c] = 2 Fe(II)-[cytochrome c] + pyruvate + 2 H(+). In terms of biological role, involved in D-lactate, but not L-lactate catabolic process. In Mus musculus (Mouse), this protein is Probable D-lactate dehydrogenase, mitochondrial.